The chain runs to 374 residues: Carbamoyl phosphate synthase small chain (374 aa).

The interval 1–186 (MTEHAILVLE…DRNECKRAAP (186 aa)) is CPSase. L-glutamine contacts are provided by serine 47, glycine 237, and glycine 239. Residues 189–374 (KVVAYDYGVK…RFITMMAAQS (186 aa)) form the Glutamine amidotransferase type-1 domain. Cysteine 265 (nucleophile) is an active-site residue. L-glutamine contacts are provided by leucine 266, glutamine 269, asparagine 307, glycine 309, and phenylalanine 310. Catalysis depends on residues histidine 349 and glutamate 351.

It belongs to the CarA family. Composed of two chains; the small (or glutamine) chain promotes the hydrolysis of glutamine to ammonia, which is used by the large (or ammonia) chain to synthesize carbamoyl phosphate. Tetramer of heterodimers (alpha,beta)4.

The catalysed reaction is hydrogencarbonate + L-glutamine + 2 ATP + H2O = carbamoyl phosphate + L-glutamate + 2 ADP + phosphate + 2 H(+). It carries out the reaction L-glutamine + H2O = L-glutamate + NH4(+). It functions in the pathway amino-acid biosynthesis; L-arginine biosynthesis; carbamoyl phosphate from bicarbonate: step 1/1. Its pathway is pyrimidine metabolism; UMP biosynthesis via de novo pathway; (S)-dihydroorotate from bicarbonate: step 1/3. In terms of biological role, small subunit of the glutamine-dependent carbamoyl phosphate synthetase (CPSase). CPSase catalyzes the formation of carbamoyl phosphate from the ammonia moiety of glutamine, carbonate, and phosphate donated by ATP, constituting the first step of 2 biosynthetic pathways, one leading to arginine and/or urea and the other to pyrimidine nucleotides. The small subunit (glutamine amidotransferase) binds and cleaves glutamine to supply the large subunit with the substrate ammonia. The chain is Carbamoyl phosphate synthase small chain from Xylella fastidiosa (strain Temecula1 / ATCC 700964).